A 440-amino-acid chain; its full sequence is Origin recognition complex subunit 4 (440 aa).

64 to 71 (GPKGSGKS) serves as a coordination point for ATP.

Belongs to the ORC4 family. ORC is composed of six subunits.

It localises to the nucleus. Its function is as follows. Component of the origin recognition complex (ORC) that binds origins of replication. DNA-binding is ATP-dependent, however specific DNA sequences that define origins of replication have not been identified so far. ORC is required to assemble the pre-replication complex necessary to initiate DNA replication. This chain is Origin recognition complex subunit 4 (orcD), found in Dictyostelium discoideum (Social amoeba).